The chain runs to 277 residues: Hydroxypyruvate/pyruvate aldolase (277 aa).

Histidine 54 functions as the Proton acceptor in the catalytic mechanism. A divalent metal cation is bound by residues glutamate 158 and aspartate 184.

Belongs to the HpcH/HpaI aldolase family. The cofactor is a divalent metal cation.

The catalysed reaction is D-glyceraldehyde + 3-hydroxypyruvate = (3R,4S,5R)-3,4,5,6-tetrahydroxy-2-oxohexanoate. It carries out the reaction D-glyceraldehyde + 3-hydroxypyruvate = 2-dehydro-D-gluconate. It catalyses the reaction D-glyceraldehyde + 3-hydroxypyruvate = 2-dehydro-D-galactonate. The enzyme catalyses D-glyceraldehyde + pyruvate = 2-dehydro-3-deoxy-L-galactonate. Aldolase which can catalyze in vitro the aldolisation reaction between hydroxypyruvate (HPA) or pyruvate (PA) and D-glyceraldehyde (D-GA). The condensation of hydroxypyruvate and D-glyceraldehyde produces (3R,4S,5R)-3,4,5,6-tetrahydroxy-2-oxohexanoate as the major product, 2-dehydro-D-gluconate and 2-dehydro-D-galactonate. The condensation of pyruvate and D-glyceraldehyde produces 2-dehydro-3-deoxy-L-galactonate as the major product. This Deinococcus radiodurans (strain ATCC 13939 / DSM 20539 / JCM 16871 / CCUG 27074 / LMG 4051 / NBRC 15346 / NCIMB 9279 / VKM B-1422 / R1) protein is Hydroxypyruvate/pyruvate aldolase.